Here is an 89-residue protein sequence, read N- to C-terminus: Small ribosomal subunit protein uS14 (89 aa).

This sequence belongs to the universal ribosomal protein uS14 family. In terms of assembly, part of the 30S ribosomal subunit. Contacts proteins S3 and S10.

In terms of biological role, binds 16S rRNA, required for the assembly of 30S particles and may also be responsible for determining the conformation of the 16S rRNA at the A site. The chain is Small ribosomal subunit protein uS14 from Flavobacterium psychrophilum (strain ATCC 49511 / DSM 21280 / CIP 103535 / JIP02/86).